Here is a 386-residue protein sequence, read N- to C-terminus: tRNA-specific adenosine deaminase subunit tad2 (386 aa).

The region spanning 212-322 is the CMP/dCMP-type deaminase domain; it reads TQHETYMKLA…GNDRFGGCGS (111 aa). H263 provides a ligand contact to Zn(2+). E265 serves as the catalytic Proton donor. Zn(2+)-binding residues include C293 and C296.

This sequence belongs to the cytidine and deoxycytidylate deaminase family. ADAT2 subfamily. As to quaternary structure, heterodimer with Tad3. It depends on Zn(2+) as a cofactor.

It carries out the reaction adenosine(34) in tRNA + H2O + H(+) = inosine(34) in tRNA + NH4(+). Structural subunit of tRNA-specific adenosine deaminase, which deaminates adenosine-34 (the first, also called wobble position of the anticodon) to inosine in many tRNAs. Inosine-34 allows the decoding of 3 different nucleotides at the third position of mRNA codons, as inosine is able to pair with U, C, and A. The wobble inosine tRNA modification is essential for cell cycle progression in the G1/S and G2/M transitions in fission yeast. This Schizosaccharomyces pombe (strain 972 / ATCC 24843) (Fission yeast) protein is tRNA-specific adenosine deaminase subunit tad2 (tad2).